The chain runs to 261 residues: Small ribosomal subunit protein uS2 (261 aa).

Residue S2 is modified to N-acetylserine. Residues 211 to 261 form a disordered region; that stretch reads EQNAAEDSKAEDAEEAPVADAEPDWSGETEDVDWAESGATPAAEEAAASNW. A compositionally biased stretch (acidic residues) spans 222–244; the sequence is DAEEAPVADAEPDWSGETEDVDW. A compositionally biased stretch (low complexity) spans 245-261; the sequence is AESGATPAAEEAAASNW.

It belongs to the universal ribosomal protein uS2 family. In terms of assembly, component of the small ribosomal subunit. Mature ribosomes consist of a small (40S) and a large (60S) subunit. The 40S subunit contains about 33 different proteins and 1 molecule of RNA (18S). The 60S subunit contains about 49 different proteins and 3 molecules of RNA (25S, 5.8S and 5S). Interacts with RPS21.

It localises to the cytoplasm. Required for the assembly and/or stability of the 40S ribosomal subunit. Required for the processing of the 20S rRNA-precursor to mature 18S rRNA in a late step of the maturation of 40S ribosomal subunits. The protein is Small ribosomal subunit protein uS2 of Meyerozyma guilliermondii (strain ATCC 6260 / CBS 566 / DSM 6381 / JCM 1539 / NBRC 10279 / NRRL Y-324) (Yeast).